A 157-amino-acid polypeptide reads, in one-letter code: Probable calcium-binding protein CML15 (157 aa).

EF-hand domains follow at residues 3-38, 39-74, 78-113, and 114-149; these read DQIR…LGLK, PSGD…DLNE, INSE…MGQP, and LTYK…SAVD. Ca(2+) contacts are provided by D16, D18, D20, S22, E27, D52, N54, N56, E63, D91, D93, N95, E102, D127, N129, D131, and E138.

Potential calcium sensor. The polypeptide is Probable calcium-binding protein CML15 (CML15) (Arabidopsis thaliana (Mouse-ear cress)).